Here is a 199-residue protein sequence, read N- to C-terminus: uncharacterized protein (199 aa).

This sequence to U.parvum UU376.

This is an uncharacterized protein from Ureaplasma parvum serovar 3 (strain ATCC 700970).